Reading from the N-terminus, the 356-residue chain is DNA polymerase IV (356 aa).

The region spanning Met-1 to Gly-188 is the UmuC domain. Mg(2+) is bound by residues Asp-11 and Asp-106. Glu-107 is an active-site residue.

The protein belongs to the DNA polymerase type-Y family. Monomer. Mg(2+) serves as cofactor.

It localises to the cytoplasm. The enzyme catalyses DNA(n) + a 2'-deoxyribonucleoside 5'-triphosphate = DNA(n+1) + diphosphate. In terms of biological role, poorly processive, error-prone DNA polymerase involved in untargeted mutagenesis. Copies undamaged DNA at stalled replication forks, which arise in vivo from mismatched or misaligned primer ends. These misaligned primers can be extended by PolIV. Exhibits no 3'-5' exonuclease (proofreading) activity. May be involved in translesional synthesis, in conjunction with the beta clamp from PolIII. This is DNA polymerase IV from Listeria monocytogenes serotype 4b (strain F2365).